A 424-amino-acid chain; its full sequence is MKIIVFGITHKKATIDLREKVAFSQSKKQEAYSLLKESPFIHEAVILSTCNRSEVFAVVQDTSIARRWFKRFYTDFFQLKETALEGCNHFEKGREAVQYLYHVCVGVDSLVIGEDQILGQVKEAHAEALDFAATGKILNKLFLEAVTTAKEVKTETAISENALSISSIAVKQMENHLKGLVGKTVLVVGFGKMSRIAIENLLCKGIKRLYICNRTKESVQELIEKHPQIHYLSYDQKYEMLNGVDAVISATGAPHFIFYKEDMEKIYQKHRPMCMIDIALPRDIDPAVKEIEGIELFHIDDLKEIANENLAYRMDCIEIIKQSINEAIEKYEGWYQCLPIYPRIQAIKAYSETLTDQELEKLFKRLDHMAEEDRQVIEVVVKSLVKKMWKTPILQLKDAGIRGNGEAFAAFVDEFLGLDAGCGK.

Residues 49–52, Ser-109, 114–116, and Gln-120 each bind substrate; these read TCNR and EDQ. Cys-50 functions as the Nucleophile in the catalytic mechanism. 189 to 194 contacts NADP(+); sequence GFGKMS.

It belongs to the glutamyl-tRNA reductase family. As to quaternary structure, homodimer.

The catalysed reaction is (S)-4-amino-5-oxopentanoate + tRNA(Glu) + NADP(+) = L-glutamyl-tRNA(Glu) + NADPH + H(+). The protein operates within porphyrin-containing compound metabolism; protoporphyrin-IX biosynthesis; 5-aminolevulinate from L-glutamyl-tRNA(Glu): step 1/2. Catalyzes the NADPH-dependent reduction of glutamyl-tRNA(Glu) to glutamate 1-semialdehyde (GSA). This chain is Glutamyl-tRNA reductase, found in Alkaliphilus metalliredigens (strain QYMF).